Here is a 72-residue protein sequence, read N- to C-terminus: Protein kish-A (72 aa).

The first 26 residues, Met-1–Ser-26, serve as a signal peptide directing secretion. Over Leu-27–Lys-53 the chain is Extracellular. The N-linked (GlcNAc...) asparagine glycan is linked to Asn-35. The helical transmembrane segment at Ser-54 to Val-71 threads the bilayer. Gln-72 is a topological domain (cytoplasmic).

The protein belongs to the KISH family.

It is found in the golgi apparatus membrane. Its function is as follows. Involved in the early part of the secretory pathway. In Gallus gallus (Chicken), this protein is Protein kish-A (TMEM167A).